The chain runs to 1415 residues: DNA-directed RNA polymerase subunit beta' (1415 aa).

The Zn(2+) site is built by C72, C74, C87, and C90. Residues D463, D465, and D467 each contribute to the Mg(2+) site. The Zn(2+) site is built by C812, C886, C893, and C896.

Belongs to the RNA polymerase beta' chain family. In terms of assembly, the RNAP catalytic core consists of 2 alpha, 1 beta, 1 beta' and 1 omega subunit. When a sigma factor is associated with the core the holoenzyme is formed, which can initiate transcription. The cofactor is Mg(2+). It depends on Zn(2+) as a cofactor.

The catalysed reaction is RNA(n) + a ribonucleoside 5'-triphosphate = RNA(n+1) + diphosphate. Its function is as follows. DNA-dependent RNA polymerase catalyzes the transcription of DNA into RNA using the four ribonucleoside triphosphates as substrates. The protein is DNA-directed RNA polymerase subunit beta' of Dinoroseobacter shibae (strain DSM 16493 / NCIMB 14021 / DFL 12).